The sequence spans 301 residues: MYHTPVLLKEMLDILSPQNGGIYVDATFGSGGYSRAILNSADCQVYAIDQDEYTYTFYEKLSHDFPNRIHFFINKFSKIQQILNNVQIKKVDGVVFDIGVSSMQLEDASRGFSFSKNGPLDMRMSTSLSGVDARMFVNTVSEVEIANVIYQYGGEKYSRKIARAIVNARNKNMINTTGELASIIRSVVSRSKNHSIDPATRTFQAIRIWVNKELEELEKGIACAANILNQGGKIIVISFHSLEDRIVKVMFKLLCDGKSVNLLNLGLGFQLINKKIIRPTAEEIHSNPRARSAKLRAILKL.

S-adenosyl-L-methionine is bound by residues 31–33 (GGY), Asp-49, Phe-76, Asp-97, and Gln-104.

Belongs to the methyltransferase superfamily. RsmH family.

The protein localises to the cytoplasm. It carries out the reaction cytidine(1402) in 16S rRNA + S-adenosyl-L-methionine = N(4)-methylcytidine(1402) in 16S rRNA + S-adenosyl-L-homocysteine + H(+). In terms of biological role, specifically methylates the N4 position of cytidine in position 1402 (C1402) of 16S rRNA. The chain is Ribosomal RNA small subunit methyltransferase H from Ehrlichia ruminantium (strain Gardel).